The sequence spans 112 residues: DIVMTQAAFSNPVTLGTSASFSCRSSKSLQQSKGITYLYWYLQKPGQSPQLLIYQMSNLASGVPDRFSGSGSGTDFTLRISRVEAEDVGVYYCANLQELPYTFGGGTKLEIK.

Residues 1 to 23 are framework-1; sequence DIVMTQAAFSNPVTLGTSASFSC. Cysteines 23 and 93 form a disulfide. The tract at residues 24-39 is complementarity-determining-1; that stretch reads RSSKSLQQSKGITYLY. The framework-2 stretch occupies residues 40 to 54; it reads WYLQKPGQSPQLLIY. The complementarity-determining-2 stretch occupies residues 55-61; that stretch reads QMSNLAS. Positions 62 to 93 are framework-3; that stretch reads GVPDRFSGSGSGTDFTLRISRVEAEDVGVYYC. The complementarity-determining-3 stretch occupies residues 94–102; the sequence is ANLQELPYT. The framework-4 stretch occupies residues 103 to 112; it reads FGGGTKLEIK.

This chain is Ig kappa chain V-II region 2S1.3, found in Mus musculus (Mouse).